The chain runs to 637 residues: MDFIKSAASFIAKAGSQFPYDLNEKIPLSSNSVWTLQTGSIRESAQPCSVFSISLSTHPEWAELADRACETMKTLRHPCIIKYLSTYKSSTHLYIATETVRPVTTELNELSAEIKTYGLWRVSAALSFLNDKNIVHGNLQMSSVYLNSADEWIIGDFFLAGDSPQFIKDNHDKILNWSRLVPFEIQSSTLNSASFIYLDSYELGKFISHLYNGTPGDLSQRGNIPANIFVSAKKLLNVEGKQKLLASEFLKLGERPGGFFRTHLITLYELLSEVRINEEEDRVKLKQLLSSKLEVIPKNYIQKVVLNILFLLLSIDTHSDVVELLFKCAQIVKGRPDIEKDFGVPLLSLLKQQSVPIRGLLLSGIINNPDVLPKNIYEDTSFSVFANLVRSNSPTLKEHAIVVFSIIAPKLSKKTLNNELLRSLAVVQNDQHPTLRTNSTICLGKIAEYLDASVRKPVLAAALSRSLKDPFVPAREAALKVLLSVQNYFDTKDVAIKLFPSVVPLLIDENEGIRRTAEDVTDQFLSRIKNFNLGEKENVSAPAKFNGSFWSKFIHSSSASPSPSIDMKKESLELKNDTTEIKEKKNSKSRVVGNTENSKDEFNNPLFETEEQIDESWMENWNDEEETENNVEESWGL.

The 296-residue stretch at 1-296 (MDFIKSAASF…QLLSSKLEVI (296 aa)) folds into the Protein kinase domain. An HEAT repeat occupies 414–450 (KTLNNELLRSLAVVQNDQHPTLRTNSTICLGKIAEYL). A compositionally biased stretch (basic and acidic residues) spans 576–586 (NDTTEIKEKKN). A disordered region spans residues 576–637 (NDTTEIKEKK…ENNVEESWGL (62 aa)). A compositionally biased stretch (acidic residues) spans 608–631 (ETEEQIDESWMENWNDEEETENNV).

It localises to the golgi apparatus. This chain is Protein kinase domain-containing protein ppk3 (ppk3), found in Schizosaccharomyces pombe (strain 972 / ATCC 24843) (Fission yeast).